The primary structure comprises 264 residues: Caffeoyl-CoA O-methyltransferase 2 (264 aa).

Over residues 1-20 (MATTATEATKTTAPAQEQQA) the composition is skewed to low complexity. Residues 1–37 (MATTATEATKTTAPAQEQQANGNGNGEQKTRHSEVGH) form a disordered region. Residues 28–37 (QKTRHSEVGH) are compositionally biased toward basic and acidic residues. Residue lysine 38 participates in substrate binding. S-adenosyl-L-methionine contacts are provided by residues threonine 80, glutamate 102, 104–105 (GV), serine 110, aspartate 128, and alanine 157. A substrate-binding site is contributed by aspartate 180. An a divalent metal cation-binding site is contributed by aspartate 180. S-adenosyl-L-methionine is bound at residue aspartate 182. Aspartate 206 and asparagine 207 together coordinate a divalent metal cation. Asparagine 211 serves as a coordination point for substrate.

The protein belongs to the class I-like SAM-binding methyltransferase superfamily. Cation-dependent O-methyltransferase family. CCoAMT subfamily. It depends on a divalent metal cation as a cofactor.

The enzyme catalyses (E)-caffeoyl-CoA + S-adenosyl-L-methionine = (E)-feruloyl-CoA + S-adenosyl-L-homocysteine + H(+). The protein operates within aromatic compound metabolism; phenylpropanoid biosynthesis. Functionally, methylates caffeoyl-CoA to feruloyl-CoA and 5-hydroxyferuloyl-CoA to sinapoyl-CoA. Plays a role in the synthesis of feruloylated polysaccharides. Involved in the reinforcement of the plant cell wall. Also involved in the responding to wounding or pathogen challenge by the increased formation of cell wall-bound ferulic acid polymers. The chain is Caffeoyl-CoA O-methyltransferase 2 (CCOAOMT2) from Zea mays (Maize).